The primary structure comprises 81 residues: Small ribosomal subunit protein bS16c (81 aa).

This sequence belongs to the bacterial ribosomal protein bS16 family.

The protein resides in the plastid. It is found in the chloroplast. The polypeptide is Small ribosomal subunit protein bS16c (Emiliania huxleyi (Coccolithophore)).